The sequence spans 293 residues: Ankyrin repeat and SOCS box protein 11 (293 aa).

ANK repeat units follow at residues 36 to 65 (DDRT…NVGM), 69 to 98 (DGIT…DANA), 102 to 131 (DGAT…AHHP), 134 to 163 (LLCS…NVDM), 167 to 196 (SVGT…DVQC), 199 to 228 (GLDT…DRTS), and 232 to 259 (EGKT…SLSQ). Positions 244–293 (SIKHLLQTAGTCSLSQLCRWCIRRSLGQKGLNKTKTLCLPHMLHNYLLYH) constitute an SOCS box domain.

The protein belongs to the ankyrin SOCS box (ASB) family. As to quaternary structure, substrate-recognition component of the ECS(ASB11) complex, composed of asb11, cul5, elob, eloc and rnf7/rbx2. As to expression, expressed in the developing nervous system: localizes to neural plate margins and is abutting the proneuronal zone.

It localises to the endoplasmic reticulum. It functions in the pathway protein modification; protein ubiquitination. In terms of biological role, substrate-recognition component of a cullin-5-RING E3 ubiquitin-protein ligase complex (ECS complex, also named CRL5 complex), which mediates the ubiquitination and subsequent proteasomal degradation of target proteins. Acts as a regulator of the neuronal progenitor compartment size by maintaining the neural precursors in the proliferating undifferentiated state. The ECS(ASB11) complex acts as a positive regulator of Notch signaling pathway by mediating ubiquitination and degradation of DeltaA (dla). Also acts as a regulator of regenerative myogenesis. The polypeptide is Ankyrin repeat and SOCS box protein 11 (Danio rerio (Zebrafish)).